We begin with the raw amino-acid sequence, 102 residues long: Small ribosomal subunit protein uS10 (102 aa).

It belongs to the universal ribosomal protein uS10 family. As to quaternary structure, part of the 30S ribosomal subunit.

In terms of biological role, involved in the binding of tRNA to the ribosomes. The polypeptide is Small ribosomal subunit protein uS10 (Syntrophotalea carbinolica (strain DSM 2380 / NBRC 103641 / GraBd1) (Pelobacter carbinolicus)).